Reading from the N-terminus, the 951-residue chain is Serine/threonine-protein kinase ATG1 (951 aa).

The 306-residue stretch at 22–327 (FTINEEIGKG…FPEYFAHPVV (306 aa)) folds into the Protein kinase domain. ATP-binding positions include 28–36 (IGKGSFATV) and Lys51. Catalysis depends on Asp165, which acts as the Proton acceptor. 4 disordered regions span residues 343-375 (IITPSRSPEASVARHPSLRERQRENPTPKPVET), 387-458 (EQAP…YDEQ), 514-573 (HIPK…SSPS), and 924-951 (HQSMPPPSSPRHSHSGGTTPTIANTPPH). Composition is skewed to basic and acidic residues over residues 359-368 (SLRERQRENP) and 432-442 (PRQRDRTERHY). Polar residues-rich tracts occupy residues 547 to 573 (AQGNTRPDTSSARNSYGSYGKTGSSPS) and 939 to 951 (GGTTPTIANTPPH).

Belongs to the protein kinase superfamily. Ser/Thr protein kinase family. APG1/unc-51/ULK1 subfamily. As to quaternary structure, homodimer. Forms a ternary complex with ATG13 and ATG17.

Its subcellular location is the cytoplasm. The protein localises to the preautophagosomal structure membrane. The catalysed reaction is L-seryl-[protein] + ATP = O-phospho-L-seryl-[protein] + ADP + H(+). It carries out the reaction L-threonyl-[protein] + ATP = O-phospho-L-threonyl-[protein] + ADP + H(+). In terms of biological role, serine/threonine protein kinase involved in the cytoplasm to vacuole transport (Cvt) and found to be essential in autophagy, where it is required for the formation of autophagosomes. Involved in the clearance of protein aggregates which cannot be efficiently cleared by the proteasome. Required for selective autophagic degradation of the nucleus (nucleophagy) as well as for mitophagy which contributes to regulate mitochondrial quantity and quality by eliminating the mitochondria to a basal level to fulfill cellular energy requirements and preventing excess ROS production. Also involved in endoplasmic reticulum-specific autophagic process, in selective removal of ER-associated degradation (ERAD) substrates. Plays a key role in ATG9 and ATG23 cycling through the pre-autophagosomal structure and is necessary to promote ATG18 binding to ATG9 through phosphorylation of ATG9. Catalyzes phosphorylation of ATG4, decreasing the interaction between ATG4 and ATG8 and impairing deconjugation of PE-conjugated forms of ATG8. The sequence is that of Serine/threonine-protein kinase ATG1 from Sclerotinia sclerotiorum (strain ATCC 18683 / 1980 / Ss-1) (White mold).